Reading from the N-terminus, the 99-residue chain is UPF0386 protein mll0189 (99 aa).

It belongs to the UPF0386 family.

This Mesorhizobium japonicum (strain LMG 29417 / CECT 9101 / MAFF 303099) (Mesorhizobium loti (strain MAFF 303099)) protein is UPF0386 protein mll0189.